The primary structure comprises 301 residues: Putative phosphoenolpyruvate synthase regulatory protein (301 aa).

The segment covering 1-24 (MSEPVAPDGAQPAPAGATPQPLQP) has biased composition (low complexity). Positions 1 to 27 (MSEPVAPDGAQPAPAGATPQPLQPIAG) are disordered. 181–188 (GVSRSGKT) contributes to the ADP binding site.

It belongs to the pyruvate, phosphate/water dikinase regulatory protein family. PSRP subfamily.

The catalysed reaction is [pyruvate, water dikinase] + ADP = [pyruvate, water dikinase]-phosphate + AMP + H(+). It catalyses the reaction [pyruvate, water dikinase]-phosphate + phosphate + H(+) = [pyruvate, water dikinase] + diphosphate. Functionally, bifunctional serine/threonine kinase and phosphorylase involved in the regulation of the phosphoenolpyruvate synthase (PEPS) by catalyzing its phosphorylation/dephosphorylation. The sequence is that of Putative phosphoenolpyruvate synthase regulatory protein from Cupriavidus pinatubonensis (strain JMP 134 / LMG 1197) (Cupriavidus necator (strain JMP 134)).